A 369-amino-acid polypeptide reads, in one-letter code: Putative F-box/kelch-repeat protein At4g39760 (369 aa).

Residues 14–60 (SLSFSSLPHEIVVSCLARVSGSYYPKLCLVSKQFRSIILSNEIYKAR) enclose the F-box domain. Kelch repeat units follow at residues 131 to 177 (ETYI…GQYP), 178 to 224 (NIYV…KMKM), and 228 to 274 (NVYV…KNCW).

The sequence is that of Putative F-box/kelch-repeat protein At4g39760 from Arabidopsis thaliana (Mouse-ear cress).